A 251-amino-acid polypeptide reads, in one-letter code: MGIRRIGLVVPSSNVTVETEMPALLSRHPGAEFSFHSTRMRMHTVSPEGLAAMNAQRERCVLEIADAAPEVILYACLVAVMVGGPGEHHRVESAVAEQLATGGSQALVRSSAGALVEGLRALDAQRVALVTPYMRPLAEKVVAYLEAEGFTISDWRALEVADNTEVGCIPGEQVMAAARSLDLSEVDALVISCCVQMPSLPLVETAEREFGIPVLSAATAGAYSILRSLDLPVAVPGAGRLLRQDSAVTAS.

Substrate is bound by residues N14, 76–78 (CLV), Y133, and N163. The Nucleophile role is filled by C76. C76 carries the post-translational modification S-(2-succinyl)cysteine. The active-site Proton donor is C194. Substrate is bound at residue 195 to 196 (VQ).

It belongs to the maleate isomerase family. As to quaternary structure, homodimer.

It carries out the reaction maleate = fumarate. Functionally, catalyzes cis-trans isomerization of the C2-C3 double bond in maleate to yield fumarate. Shows a strict specificity for maleate, with no activity detected toward structurally related substrates including citraconate, mesaconate, dimethylmaleate, and maleamide. The chain is Maleate isomerase from Nocardia farcinica (strain IFM 10152).